The following is a 304-amino-acid chain: Oxygen-dependent coproporphyrinogen-III oxidase (304 aa).

Serine 93 contacts substrate. The a divalent metal cation site is built by histidine 97 and histidine 107. Histidine 107 acts as the Proton donor in catalysis. 109–111 is a substrate binding site; the sequence is NVR. A divalent metal cation contacts are provided by histidine 146 and histidine 176. Residues 241–276 form an important for dimerization region; it reads YVEFNLVYDRGTLFGLQSGGRTESILMSLPPQVRWG. Substrate is bound at residue 259–261; the sequence is GGR.

Belongs to the aerobic coproporphyrinogen-III oxidase family. Homodimer. A divalent metal cation is required as a cofactor.

Its subcellular location is the cytoplasm. The catalysed reaction is coproporphyrinogen III + O2 + 2 H(+) = protoporphyrinogen IX + 2 CO2 + 2 H2O. It functions in the pathway porphyrin-containing compound metabolism; protoporphyrin-IX biosynthesis; protoporphyrinogen-IX from coproporphyrinogen-III (O2 route): step 1/1. Involved in the heme biosynthesis. Catalyzes the aerobic oxidative decarboxylation of propionate groups of rings A and B of coproporphyrinogen-III to yield the vinyl groups in protoporphyrinogen-IX. The polypeptide is Oxygen-dependent coproporphyrinogen-III oxidase (Pseudomonas savastanoi pv. phaseolicola (strain 1448A / Race 6) (Pseudomonas syringae pv. phaseolicola (strain 1448A / Race 6))).